Consider the following 502-residue polypeptide: Glycerol kinase (502 aa).

Thr-14 contacts ADP. ATP-binding residues include Thr-14, Thr-15, and Ser-16. Sn-glycerol 3-phosphate is bound at residue Thr-14. Residue Arg-18 participates in ADP binding. Residues Arg-84, Glu-85, Tyr-136, and Asp-246 each coordinate sn-glycerol 3-phosphate. Positions 84, 85, 136, 246, and 247 each coordinate glycerol. Positions 268 and 311 each coordinate ADP. The ATP site is built by Thr-268, Gly-311, Gln-315, and Gly-412. ADP contacts are provided by Gly-412 and Asn-416.

The protein belongs to the FGGY kinase family. Homotetramer and homodimer (in equilibrium). Heterodimer with EIIA-Glc. Binds 1 zinc ion per glycerol kinase EIIA-Glc dimer. The zinc ion is important for dimerization.

The catalysed reaction is glycerol + ATP = sn-glycerol 3-phosphate + ADP + H(+). It functions in the pathway polyol metabolism; glycerol degradation via glycerol kinase pathway; sn-glycerol 3-phosphate from glycerol: step 1/1. With respect to regulation, activity of this regulatory enzyme is affected by several metabolites. Allosterically and non-competitively inhibited by fructose 1,6-bisphosphate (FBP) and unphosphorylated phosphocarrier protein EIIA-Glc (III-Glc), an integral component of the bacterial phosphotransferase (PTS) system. Key enzyme in the regulation of glycerol uptake and metabolism. Catalyzes the phosphorylation of glycerol to yield sn-glycerol 3-phosphate. In Escherichia coli O8 (strain IAI1), this protein is Glycerol kinase.